The chain runs to 281 residues: Bifunctional protein FolD (281 aa).

Residues 159–161 (NRS), Ser184, and Ile225 contribute to the NADP(+) site.

This sequence belongs to the tetrahydrofolate dehydrogenase/cyclohydrolase family. As to quaternary structure, homodimer.

The enzyme catalyses (6R)-5,10-methylene-5,6,7,8-tetrahydrofolate + NADP(+) = (6R)-5,10-methenyltetrahydrofolate + NADPH. It carries out the reaction (6R)-5,10-methenyltetrahydrofolate + H2O = (6R)-10-formyltetrahydrofolate + H(+). It participates in one-carbon metabolism; tetrahydrofolate interconversion. In terms of biological role, catalyzes the oxidation of 5,10-methylenetetrahydrofolate to 5,10-methenyltetrahydrofolate and then the hydrolysis of 5,10-methenyltetrahydrofolate to 10-formyltetrahydrofolate. This is Bifunctional protein FolD from Thermoplasma volcanium (strain ATCC 51530 / DSM 4299 / JCM 9571 / NBRC 15438 / GSS1).